Consider the following 227-residue polypeptide: Ribose-5-phosphate isomerase A (227 aa).

Substrate-binding positions include 26–29 (TGST), 82–85 (DGAD), and 95–98 (KGGG). Residue Glu-104 is the Proton acceptor of the active site. Lys-122 is a substrate binding site.

It belongs to the ribose 5-phosphate isomerase family. As to quaternary structure, homodimer.

It carries out the reaction aldehydo-D-ribose 5-phosphate = D-ribulose 5-phosphate. It functions in the pathway carbohydrate degradation; pentose phosphate pathway; D-ribose 5-phosphate from D-ribulose 5-phosphate (non-oxidative stage): step 1/1. In terms of biological role, catalyzes the reversible conversion of ribose-5-phosphate to ribulose 5-phosphate. The protein is Ribose-5-phosphate isomerase A of Streptococcus pyogenes serotype M28 (strain MGAS6180).